The primary structure comprises 266 residues: Putative carbamate hydrolase RutD (266 aa).

In terms of domain architecture, AB hydrolase-1 spans 14 to 115; that stretch reads PVVVLISGLG…TMLVSVNGWL (102 aa).

Belongs to the AB hydrolase superfamily. Hydrolase RutD family.

The enzyme catalyses carbamate + 2 H(+) = NH4(+) + CO2. Functionally, involved in pyrimidine catabolism. May facilitate the hydrolysis of carbamate, a reaction that can also occur spontaneously. This chain is Putative carbamate hydrolase RutD, found in Shigella flexneri serotype 5b (strain 8401).